Here is a 303-residue protein sequence, read N- to C-terminus: Guanosine-inosine kinase (303 aa).

Belongs to the carbohydrate kinase PfkB family. In terms of assembly, homodimer. Mg(2+) serves as cofactor.

The catalysed reaction is guanosine + ATP = GMP + ADP + H(+). It catalyses the reaction inosine + ATP = IMP + ADP + H(+). It participates in purine metabolism; IMP biosynthesis via salvage pathway; IMP from inosine: step 1/1. It functions in the pathway purine metabolism; GMP biosynthesis via salvage pathway. With respect to regulation, kinase activity is stimulated by pyrimidine nucleotides, especially CMP and CTP, and inhibited by AMP, ADP and GMP. Activity is stimulated by potassium or ammonium ions. Functionally, catalyzes the phosphorylation of guanosine and inosine to GMP and IMP, respectively. Can also use deoxyguanosine. Shows a strong preference for guanosine. dATP, GTP and dGTP can serve as phosphate donors. In Exiguobacterium acetylicum (Brevibacterium acetylicum), this protein is Guanosine-inosine kinase.